A 290-amino-acid chain; its full sequence is 4-hydroxybenzoate octaprenyltransferase (290 aa).

6 helical membrane passes run 41-61 (WPLV…GCAM), 89-109 (WEAV…ILPL), 133-153 (FFAI…PMAF), 158-178 (GTVP…SVAY), 202-224 (FGRF…YAWI), and 269-289 (WLGG…GAAG).

It belongs to the UbiA prenyltransferase family. Requires Mg(2+) as cofactor.

The protein localises to the cell inner membrane. It carries out the reaction all-trans-octaprenyl diphosphate + 4-hydroxybenzoate = 4-hydroxy-3-(all-trans-octaprenyl)benzoate + diphosphate. The protein operates within cofactor biosynthesis; ubiquinone biosynthesis. Functionally, catalyzes the prenylation of para-hydroxybenzoate (PHB) with an all-trans polyprenyl group. Mediates the second step in the final reaction sequence of ubiquinone-8 (UQ-8) biosynthesis, which is the condensation of the polyisoprenoid side chain with PHB, generating the first membrane-bound Q intermediate 3-octaprenyl-4-hydroxybenzoate. This chain is 4-hydroxybenzoate octaprenyltransferase, found in Burkholderia vietnamiensis (strain G4 / LMG 22486) (Burkholderia cepacia (strain R1808)).